We begin with the raw amino-acid sequence, 772 residues long: Transducin-like enhancer protein 4 (772 aa).

Disordered stretches follow at residues 1–24 (MIRD…PAQP) and 183–359 (LPIK…LTGL). The interval 1-137 (MIRDLSKMYP…AIIGQQLQAQ (137 aa)) is q domain. The segment at 138–205 (HLSHAHGLPV…HQRDRDSIKS (68 aa)) is GP domain. The span at 184-203 (PIKDEKKHHDSDHQRDRDSI) shows a compositional bias: basic and acidic residues. The span at 204-213 (KSSSVSPSAS) shows a compositional bias: low complexity. The segment at 206-275 (SSVSPSASFR…SPRGSPAHSP (70 aa)) is ccN domain. 2 stretches are compositionally biased toward basic and acidic residues: residues 216–253 (AAEK…KSDD) and 274–290 (SPRE…KKDA). The tract at residues 276–452 (RENGLDKPRL…GGKPAYSFHV (177 aa)) is SP domain. Positions 291-306 (PISPASIASSSSTPSS) are enriched in low complexity. Residues 307–316 (KSKEHSHNEK) are compositionally biased toward basic and acidic residues. The segment covering 318 to 329 (TTPVSKSNTPTP) has biased composition (polar residues). 7 WD repeats span residues 484-522 (NHGE…NKSP), 530-569 (NRDN…PRIK), 574-613 (SSAP…LVRQ), 616-655 (GHTD…QLQQ), 657-696 (DFTS…KYQL), 698-737 (LHES…SIFQ), and 739-772 (KESS…EVIY).

The protein belongs to the WD repeat Groucho/TLE family. Interacts with tcf7, tcf7l1, ripply2.2/bowline, dscr6/ripply3 and foxd3. Associates with tbx6 in the presence of ripply2.2/bowline. Interacts with EFNB1 through the SP domain. Ubiquitinated by XIAP/BIRC4. In terms of tissue distribution, expressed at high levels in the spleen and ovary.

It is found in the nucleus. Functionally, transcriptional corepressor. Functions with ripply2.2/bowline to down regulate transcription of tbx6-dependent gene expression. Represses transcription of siamois and nodal3. This is Transducin-like enhancer protein 4 (tle4) from Xenopus laevis (African clawed frog).